The sequence spans 20 residues: Sperm acrosome membrane-associated protein 3, processed form (20 aa).

This sequence belongs to the glycosyl hydrolase 22 family.

Functionally, sperm surface membrane protein that may be involved in sperm-egg plasma membrane adhesion and fusion during fertilization. It could be a potential receptor for the egg oligosaccharide residue N-acetylglucosamine, which is present in the extracellular matrix over the egg plasma membrane. This chain is Sperm acrosome membrane-associated protein 3, processed form (SPACA3), found in Vulpes vulpes (Red fox).